The chain runs to 191 residues: Peptidyl-tRNA hydrolase (191 aa).

Tyr-14 lines the tRNA pocket. His-19 functions as the Proton acceptor in the catalytic mechanism. Residues Tyr-64, Asn-66, and Asn-112 each contribute to the tRNA site.

It belongs to the PTH family. As to quaternary structure, monomer.

Its subcellular location is the cytoplasm. The enzyme catalyses an N-acyl-L-alpha-aminoacyl-tRNA + H2O = an N-acyl-L-amino acid + a tRNA + H(+). Its function is as follows. Hydrolyzes ribosome-free peptidyl-tRNAs (with 1 or more amino acids incorporated), which drop off the ribosome during protein synthesis, or as a result of ribosome stalling. Functionally, catalyzes the release of premature peptidyl moieties from peptidyl-tRNA molecules trapped in stalled 50S ribosomal subunits, and thus maintains levels of free tRNAs and 50S ribosomes. The sequence is that of Peptidyl-tRNA hydrolase from Clostridium botulinum (strain Eklund 17B / Type B).